We begin with the raw amino-acid sequence, 176 residues long: Putative ribosomal protein eS10-like (176 aa).

A disordered region spans residues 104–176; it reads TLHRSRPETG…CGRGRGQPPQ (73 aa). Over residues 108 to 139 the composition is skewed to basic and acidic residues; it reads SRPETGRPRPKGLEGKRPARLTRREADRDTYR.

Belongs to the eukaryotic ribosomal protein eS10 family.

This is Putative ribosomal protein eS10-like (RPS10P5) from Homo sapiens (Human).